The chain runs to 1034 residues: Beta-galactosidase (1034 aa).

Residues Asn-108 and Asp-207 each coordinate substrate. Asp-207 is a Na(+) binding site. Mg(2+) is bound by residues Glu-423, His-425, and Glu-468. Residues Glu-468 and 544-547 (EYAH) contribute to the substrate site. The active-site Proton donor is Glu-468. Catalysis depends on Glu-544, which acts as the Nucleophile. Residue Asn-604 participates in Mg(2+) binding. Phe-608 and Asn-611 together coordinate Na(+). Asn-611 and Trp-1010 together coordinate substrate.

This sequence belongs to the glycosyl hydrolase 2 family. As to quaternary structure, homotetramer. Mg(2+) is required as a cofactor. It depends on Na(+) as a cofactor.

It catalyses the reaction Hydrolysis of terminal non-reducing beta-D-galactose residues in beta-D-galactosides.. This chain is Beta-galactosidase, found in Klebsiella pneumoniae.